Reading from the N-terminus, the 418-residue chain is Serine/threonine-protein kinase Sgk1 (418 aa).

Residues 50-78 (PQEPELLNENSSPPPSPSQQINLGPSSNP) are disordered. Residues 68 to 78 (QQINLGPSSNP) are compositionally biased toward polar residues. The 258-residue stretch at 85-342 (FQFLKIIGKG…FMEIKNHMFF (258 aa)) folds into the Protein kinase domain. Residues 91 to 99 (IGKGSFGKV) and K114 each bind ATP. The active-site Proton acceptor is D209. One can recognise an AGC-kinase C-terminal domain in the interval 343-418 (SPINWDDLIN…SYAPPMESYL (76 aa)).

This sequence belongs to the protein kinase superfamily. AGC Ser/Thr protein kinase family.

It is found in the cytoplasm. The protein localises to the nucleus. The protein resides in the endoplasmic reticulum. It carries out the reaction L-seryl-[protein] + ATP = O-phospho-L-seryl-[protein] + ADP + H(+). The catalysed reaction is L-threonyl-[protein] + ATP = O-phospho-L-threonyl-[protein] + ADP + H(+). In terms of biological role, protein kinase that may play an important role in cellular stress response. Plays an important role in activating certain potassium, sodium, and chloride channels, suggesting an involvement in the regulation of processes such as cell survival, neuronal excitability, and renal sodium excretion. The sequence is that of Serine/threonine-protein kinase Sgk1 (sgk1) from Xenopus tropicalis (Western clawed frog).